Consider the following 877-residue polypeptide: Bifunctional uridylyltransferase/uridylyl-removing enzyme (877 aa).

The uridylyltransferase stretch occupies residues 1–335 (MDGPNSDRAH…HRDDAFSPTP (335 aa)). The segment at 336-695 (VNDHFQAVND…LRPESLRGSV (360 aa)) is uridylyl-removing. One can recognise an HD domain in the interval 454–576 (VDEHTLFVVR…VRNQNTLNHL (123 aa)). ACT domains are found at residues 696–778 (EVFI…AVSR) and 805–877 (ILEL…VGDQ).

This sequence belongs to the GlnD family. The cofactor is Mg(2+).

The catalysed reaction is [protein-PII]-L-tyrosine + UTP = [protein-PII]-uridylyl-L-tyrosine + diphosphate. The enzyme catalyses [protein-PII]-uridylyl-L-tyrosine + H2O = [protein-PII]-L-tyrosine + UMP + H(+). Uridylyltransferase (UTase) activity is inhibited by glutamine, while glutamine activates uridylyl-removing (UR) activity. In terms of biological role, modifies, by uridylylation and deuridylylation, the PII regulatory proteins (GlnB and homologs), in response to the nitrogen status of the cell that GlnD senses through the glutamine level. Under low glutamine levels, catalyzes the conversion of the PII proteins and UTP to PII-UMP and PPi, while under higher glutamine levels, GlnD hydrolyzes PII-UMP to PII and UMP (deuridylylation). Thus, controls uridylylation state and activity of the PII proteins, and plays an important role in the regulation of nitrogen fixation and metabolism. The chain is Bifunctional uridylyltransferase/uridylyl-removing enzyme from Methylococcus capsulatus (strain ATCC 33009 / NCIMB 11132 / Bath).